The chain runs to 244 residues: uncharacterized protein (244 aa).

Basic and acidic residues-rich tracts occupy residues 1–10 (MNDPFARMET) and 100–127 (GTRG…HGEE). Disordered regions lie at residues 1–79 (MNDP…GEEL), 100–130 (GTRG…EPNY), and 219–244 (TGAS…EIKL).

This is an uncharacterized protein from Homo sapiens (Human).